A 396-amino-acid chain; its full sequence is Na(+)/H(+) antiporter NhaA (396 aa).

11 helical membrane-spanning segments follow: residues 14–34 (ASGI…NSGL), 59–79 (LLLW…GLEV), 95–115 (TFPA…YTFF), 124–144 (AGWA…MALL), 154–174 (VFLL…IALF), 178–198 (QLSL…LWMN), 205–225 (IGLY…SGVH), 254–274 (ALHP…NAGV), 278–298 (GIGL…GLFV), 328–348 (IFAV…IASL), and 363–383 (LGIL…LRMS).

It belongs to the NhaA Na(+)/H(+) (TC 2.A.33) antiporter family.

It localises to the cell inner membrane. The enzyme catalyses Na(+)(in) + 2 H(+)(out) = Na(+)(out) + 2 H(+)(in). Functionally, na(+)/H(+) antiporter that extrudes sodium in exchange for external protons. The polypeptide is Na(+)/H(+) antiporter NhaA (Aeromonas salmonicida (strain A449)).